The chain runs to 515 residues: 1-pyrroline-5-carboxylate dehydrogenase 1 (515 aa).

Catalysis depends on residues E286 and C320.

It belongs to the aldehyde dehydrogenase family. RocA subfamily.

It carries out the reaction L-glutamate 5-semialdehyde + NAD(+) + H2O = L-glutamate + NADH + 2 H(+). Its pathway is amino-acid degradation; L-proline degradation into L-glutamate; L-glutamate from L-proline: step 2/2. In Halalkalibacterium halodurans (strain ATCC BAA-125 / DSM 18197 / FERM 7344 / JCM 9153 / C-125) (Bacillus halodurans), this protein is 1-pyrroline-5-carboxylate dehydrogenase 1 (rocA1).